The primary structure comprises 229 residues: Geodin cluster transcription factor (229 aa).

The zn(2)-C6 fungal-type DNA-binding region spans 12–39 (CHACAASKVRCSKEKPTCSRCSKRGTTC). Disordered regions lie at residues 50–100 (KQLN…PGTT) and 141–169 (TANSEPLDAEGGITSSHNTSSNSPARPPT). Composition is skewed to polar residues over residues 51–71 (QLNNRSTAKESSNTTRTSLAT) and 153–164 (ITSSHNTSSNSP).

The protein resides in the nucleus. In terms of biological role, transcription factor that regulates the expression of the gene cluster that mediates the biosynthesis of geodin, an intermediate in the biosynthesis of other natural products. The polypeptide is Geodin cluster transcription factor (Aspergillus terreus (strain NIH 2624 / FGSC A1156)).